We begin with the raw amino-acid sequence, 573 residues long: MSKEESGHVTPEKGDNVVDYQASTTVLPSEGPERDANWFTRNGLNVDSFKKKHYGPGMVELERPMKARHLHMIAIGGSIGAGFFVGSGGALAKGGPGSLFVDFLIIGIMMFNVVYALGELAIMYPVSGSFYTYSARFIDPAWGFAMGWNYVLQWAAVLPLELTVCGITISYWNSEITTAAWISLFLGVIIIINLFGALGYAEEEFWASCFKLAATVIFMIIAFVLVLGGGPKDGRYHEYWGARYWYDPGAFKNGFKGFCSVFVTAAFSFSGTELVGLAAAESTNPTKNMPGAIKQVFWRITIFYILGLFFVGLLINSDDPALLSSAAYADSKASPFVLVGKYAGLKGFDHFMNLVILASVLSIGVSGVYGGSRTLTALAQQGYAPKLFTYIDKSGRPLPSVIFLILFGFIAYVSLDATGPVVFDWLLAISGLAALFTWGSVCLAHIRFRKAWKYHGHTLDEIPFKAAGGVYGSYLGLFICVIVLMAQFYTAIAAPPGSPGVGTAEDFFKQYLAAPVVLGFWIVGWLWKRQPFLRTKNIDVDTGLREFDWDEINAERTRIAPLPAWRRIIHHTF.

A run of 11 helical transmembrane segments spans residues 72 to 92 (MIAI…GALA), 99 to 117 (LFVD…VYAL), 176 to 200 (ITTA…ALGY), 212 to 229 (LAAT…VLGG), 257 to 280 (GFCS…LAAA), 296 to 315 (VFWR…GLLI), 351 to 371 (FMNL…VYGG), 398 to 415 (LPSV…YVSL), 425 to 444 (WLLA…VCLA), 470 to 494 (VYGS…AIAA), and 511 to 527 (YLAA…GWLW).

Belongs to the amino acid-polyamine-organocation (APC) superfamily.

It is found in the membrane. This Hypocrea atroviridis (Trichoderma atroviride) protein is Amino-acid permease inda1 (inda1).